Here is a 366-residue protein sequence, read N- to C-terminus: Probable dual-specificity RNA methyltransferase RlmN (366 aa).

E107 acts as the Proton acceptor in catalysis. One can recognise a Radical SAM core domain in the interval 113–342 (AEERMTACLS…MAQKFHVTVR (230 aa)). A disulfide bridge links C120 with C353. Positions 127, 131, and 134 each coordinate [4Fe-4S] cluster. Residues 177–178 (GE), S210, 233–235 (SLH), and N310 contribute to the S-adenosyl-L-methionine site. C353 functions as the S-methylcysteine intermediate in the catalytic mechanism.

Belongs to the radical SAM superfamily. RlmN family. [4Fe-4S] cluster is required as a cofactor.

It localises to the cytoplasm. It catalyses the reaction adenosine(2503) in 23S rRNA + 2 reduced [2Fe-2S]-[ferredoxin] + 2 S-adenosyl-L-methionine = 2-methyladenosine(2503) in 23S rRNA + 5'-deoxyadenosine + L-methionine + 2 oxidized [2Fe-2S]-[ferredoxin] + S-adenosyl-L-homocysteine. The catalysed reaction is adenosine(37) in tRNA + 2 reduced [2Fe-2S]-[ferredoxin] + 2 S-adenosyl-L-methionine = 2-methyladenosine(37) in tRNA + 5'-deoxyadenosine + L-methionine + 2 oxidized [2Fe-2S]-[ferredoxin] + S-adenosyl-L-homocysteine. Specifically methylates position 2 of adenine 2503 in 23S rRNA and position 2 of adenine 37 in tRNAs. The sequence is that of Probable dual-specificity RNA methyltransferase RlmN from Chlorobium chlorochromatii (strain CaD3).